The primary structure comprises 152 residues: Small ribosomal subunit protein uS13 (152 aa).

Ser2 carries the post-translational modification N-acetylserine. Lys91 participates in a covalent cross-link: Glycyl lysine isopeptide (Lys-Gly) (interchain with G-Cter in SUMO2). An N6-acetyllysine; alternate mark is found at Lys94 and Lys106. Glycyl lysine isopeptide (Lys-Gly) (interchain with G-Cter in SUMO2); alternate cross-links involve residues Lys94 and Lys106.

It belongs to the universal ribosomal protein uS13 family. Component of the small ribosomal subunit.

It is found in the cytoplasm. Its function is as follows. Component of the small ribosomal subunit. The ribosome is a large ribonucleoprotein complex responsible for the synthesis of proteins in the cell. In Homo sapiens (Human), this protein is Small ribosomal subunit protein uS13 (RPS18).